We begin with the raw amino-acid sequence, 141 residues long: Large ribosomal subunit protein uL11 (141 aa).

Belongs to the universal ribosomal protein uL11 family. As to quaternary structure, part of the ribosomal stalk of the 50S ribosomal subunit. Interacts with L10 and the large rRNA to form the base of the stalk. L10 forms an elongated spine to which L12 dimers bind in a sequential fashion forming a multimeric L10(L12)X complex. Post-translationally, one or more lysine residues are methylated.

Its function is as follows. Forms part of the ribosomal stalk which helps the ribosome interact with GTP-bound translation factors. The polypeptide is Large ribosomal subunit protein uL11 (Roseiflexus sp. (strain RS-1)).